A 425-amino-acid chain; its full sequence is TRAF family member-associated NF-kappa-B activator (425 aa).

Residue M1 is modified to N-acetylmethionine. A necessary for interaction with ZC3H12A region spans residues 1–31; that stretch reads MDKNIGEQLNKAYEAFRQACMDRDSAVKELQ. Residues 22 to 62 are a coiled coil; it reads DRDSAVKELQQKTENYEQRIREQQEQLSLQQTIIDKLKSQL. A necessary for interaction with TRAF6 region spans residues 70–191; sequence DNNYGCVPLL…QCTDKTDKQE (122 aa). Residues S126 and S129 each carry the phosphoserine modification. Residues 133-172 form an interaction with TBK1 and IKBKE region; that stretch reads HERGNIEKTFWDLKEEFHKICMLAKAQKDHLSKLNIPDTA. The tract at residues 172–191 is TRAF family member interaction; sequence ATETQCSVPIQCTDKTDKQE. A phosphoserine mark is found at S178 and S208. T213 carries the post-translational modification Phosphothreonine. 5 positions are modified to phosphoserine: S225, S228, S341, S354, and S357. The segment at 393–420 adopts a UBZ1-type zinc-finger fold; it reads PRVCEFCQAVFPPSITSRGDFLRHLNSH. Zn(2+)-binding residues include C396, C399, H416, and H420.

As to quaternary structure, homodimer. Found in a deubiquitination complex with TANK, USP10 and ZC3H12A; this complex inhibits genotoxic stress- or interleukin-1-beta-mediated NF-kappaB activation by promoting IKBKG or TRAF6 deubiquitination. Interacts with IKBKG; this interaction increases in response to DNA damage. Interacts with TRAF6; this interaction increases in response to DNA damage and recruits USP10 to the ubiquitinated TRAF6. Interacts with USP10; this interaction increases in response to DNA damage. Interacts with ZC3H12A; this interaction increases in response to DNA damage. Interacts with TBK1. Interacts with IKBKE. Also interacts with TRAF1, TRAF2, and TRAF3 by binding to their TRAF-C domains; the interaction with TRAF2 is disrupted by the phosphorylation of TANK by IKBKE. Interacts more strongly with TRAF1 and TRAF2 than TRAF3. Interacts with IKBKG; the interaction is enhanced by IKBKE and TBK1. Part of a ternary complex consisting of TANK, IKBKB and IKBKG. (Microbial infection) Interacts with vaccinia virus protein C6. In terms of assembly, (Microbial infection) Interacts with Seneca Valley virus protease 3C; this interaction allows the cleavage of TANK and subsequent suppression of host innate immunity. Phosphorylated by IKBKE. Post-translationally, (Microbial infection) Cleaved by encephalomyocarditis virus (EMCV) protease 3C. This cleavage allows the virus to disrupt the TANK-TBK1-IKKepsilon-IRF3 complex, thereby inhibiting the induction of the IFN-beta signal pathway. In terms of processing, (Microbial infection) Cleaved by Seneca Valley virus protease 3C allowing the virus to suppress interferon type-I through both RIG-I and Toll-like receptor-dependent pathways. Ubiquitous.

Its subcellular location is the cytoplasm. Functionally, adapter protein involved in I-kappa-B-kinase (IKK) regulation which constitutively binds TBK1 and IKBKE playing a role in antiviral innate immunity. Acts as a regulator of TRAF function by maintaining them in a latent state. Blocks TRAF2 binding to LMP1 and inhibits LMP1-mediated NF-kappa-B activation. Negatively regulates NF-kappaB signaling and cell survival upon DNA damage. Plays a role as an adapter to assemble ZC3H12A, USP10 in a deubiquitination complex which plays a negative feedback response to attenuate NF-kappaB activation through the deubiquitination of IKBKG or TRAF6 in response to interleukin-1-beta (IL1B) stimulation or upon DNA damage. Promotes UBP10-induced deubiquitination of TRAF6 in response to DNA damage. May control negatively TRAF2-mediated NF-kappa-B activation signaled by CD40, TNFR1 and TNFR2. The polypeptide is TRAF family member-associated NF-kappa-B activator (TANK) (Homo sapiens (Human)).